The sequence spans 467 residues: Ribulose bisphosphate carboxylase large chain (467 aa).

Residues 1–2 (MS) constitute a propeptide that is removed on maturation. Pro-3 bears the N-acetylproline mark. N6,N6,N6-trimethyllysine is present on Lys-14. Residues Asn-123 and Thr-173 each coordinate substrate. The Proton acceptor role is filled by Lys-175. Lys-177 contacts substrate. Positions 201, 203, and 204 each coordinate Mg(2+). N6-carboxylysine is present on Lys-201. Residue His-294 is the Proton acceptor of the active site. Positions 295, 327, and 379 each coordinate substrate.

The protein belongs to the RuBisCO large chain family. Type I subfamily. As to quaternary structure, heterohexadecamer of 8 large chains and 8 small chains; disulfide-linked. The disulfide link is formed within the large subunit homodimers. Mg(2+) serves as cofactor. In terms of processing, the disulfide bond which can form in the large chain dimeric partners within the hexadecamer appears to be associated with oxidative stress and protein turnover.

It is found in the plastid. The protein localises to the chloroplast. It catalyses the reaction 2 (2R)-3-phosphoglycerate + 2 H(+) = D-ribulose 1,5-bisphosphate + CO2 + H2O. It carries out the reaction D-ribulose 1,5-bisphosphate + O2 = 2-phosphoglycolate + (2R)-3-phosphoglycerate + 2 H(+). Its function is as follows. RuBisCO catalyzes two reactions: the carboxylation of D-ribulose 1,5-bisphosphate, the primary event in carbon dioxide fixation, as well as the oxidative fragmentation of the pentose substrate in the photorespiration process. Both reactions occur simultaneously and in competition at the same active site. The chain is Ribulose bisphosphate carboxylase large chain from Calamus usitatus (Palm tree).